Consider the following 879-residue polypeptide: Metabotropic glutamate receptor 3 (879 aa).

The N-terminal stretch at 1–22 (MKMLTRLQVLTLALFSKGFLLS) is a signal peptide. The Extracellular segment spans residues 23–576 (LGDHNFLRRE…EDYIRWEDAW (554 aa)). Cysteines 57 and 99 form a disulfide. Residues S151 and 172 to 174 (AST) contribute to the L-glutamate site. An N-linked (GlcNAc...) asparagine glycan is attached at N209. L-glutamate is bound at residue Y222. 7 disulfides stabilise this stretch: C240-C527, C361-C373, C412-C419, C509-C528, C513-C531, C534-C546, and C549-C562. The N-linked (GlcNAc...) asparagine glycan is linked to N292. D301 is a binding site for L-glutamate. K389 is an L-glutamate binding site. Residues N414 and N439 are each glycosylated (N-linked (GlcNAc...) asparagine). A helical membrane pass occupies residues 577–599 (VIGPVTIACLGFMCTCMVVTVFI). The Cytoplasmic segment spans residues 600–613 (KHNNTPLVKASGRE). A helical membrane pass occupies residues 614 to 634 (LCYILLFGVGLSYCMTFFFIA). At 635 to 645 (KPSPVICALRR) the chain is on the extracellular side. A helical transmembrane segment spans residues 646-664 (LGLGSSFAICYSALLTKTN). The Cytoplasmic portion of the chain corresponds to 665 to 688 (CIARIFDGVKNGAQRPKFISPSSQ). A helical membrane pass occupies residues 689–709 (VFICLGLILVQIVMVSVWLIL). Residues 710–734 (EAPGTRRYTLAEKRETVILKCNVKD) are Extracellular-facing. Residues 735-756 (SSMLISLTYDVILVILCTVYAF) traverse the membrane as a helical segment. At 757-769 (KTRKCPENFNEAK) the chain is on the cytoplasmic side. The helical transmembrane segment at 770-792 (FIGFTMYTTCIIWLAFLPIFYVT) threads the bilayer. Residues 793–802 (SSDYRVQTTT) are Extracellular-facing. A helical membrane pass occupies residues 803–828 (MCISVSLSGFVVLGCLFAPKVHIILF). Residues 829–879 (QPQKNVVTHRLHLNRFSVSGTGTTYSQSSASTYVPTVCNGREVLDSTTSSL) are Cytoplasmic-facing.

The protein belongs to the G-protein coupled receptor 3 family. As to quaternary structure, interacts with TAMALIN.

The protein localises to the cell membrane. Functionally, G-protein coupled receptor for glutamate. Ligand binding causes a conformation change that triggers signaling via guanine nucleotide-binding proteins (G proteins) and modulates the activity of down-stream effectors. Signaling inhibits adenylate cyclase activity. The sequence is that of Metabotropic glutamate receptor 3 (GRM3) from Pongo abelii (Sumatran orangutan).